Here is a 90-residue protein sequence, read N- to C-terminus: Small ribosomal subunit protein bS16 (90 aa).

Belongs to the bacterial ribosomal protein bS16 family.

The sequence is that of Small ribosomal subunit protein bS16 from Lactococcus lactis subsp. cremoris (strain MG1363).